The chain runs to 245 residues: 8-amino-3,8-dideoxy-manno-octulosonate cytidylyltransferase (245 aa).

The protein belongs to the KdsB family.

The protein localises to the cytoplasm. It catalyses the reaction 8-amino-3,8-dideoxy-alpha-D-manno-octulosonate + CTP = CMP-8-amino-3,8-dideoxy-alpha-D-manno-oct-2-ulosonate + diphosphate. Its pathway is bacterial outer membrane biogenesis; lipopolysaccharide biosynthesis. Activates KDO8N (a required 8-carbon sugar) for incorporation into bacterial lipopolysaccharide in the Shewanella genus. This Shewanella piezotolerans (strain WP3 / JCM 13877) protein is 8-amino-3,8-dideoxy-manno-octulosonate cytidylyltransferase.